The primary structure comprises 369 residues: Glycolate oxidase (369 aa).

The residue at position 1 (Met-1) is an N-acetylmethionine. The region spanning 1–359 (MEITNVNEYE…SRSHIAADWD (359 aa)) is the FMN hydroxy acid dehydrogenase domain. Tyr-24 lines the glyoxylate pocket. Residues 77 to 79 (PTA), Ser-106, 127 to 129 (QLY), and Thr-155 each bind FMN. Tyr-129 is a binding site for glyoxylate. Residue Arg-164 coordinates glyoxylate. Lys-230 and Ser-252 together coordinate FMN. Glyoxylate contacts are provided by His-254 and Arg-257. The active-site Proton acceptor is the His-254. FMN contacts are provided by residues 285–289 (DGGVR) and 308–309 (GR). Residues 367–369 (ARL) carry the Microbody targeting signal motif.

The protein belongs to the FMN-dependent alpha-hydroxy acid dehydrogenase family. Homotetramer. FMN is required as a cofactor.

It is found in the peroxisome. It catalyses the reaction glycolate + O2 = glyoxylate + H2O2. It carries out the reaction a (2S)-2-hydroxycarboxylate + O2 = a 2-oxocarboxylate + H2O2. It participates in photosynthesis; photorespiration; glycine from 2-phosphoglycolate: step 2/3. Functionally, catalyzes the oxidation of glycolate to glyoxylate, with a reduction of O2 to H2O2. Is a key enzyme in photorespiration in green plants. To a lesser extent, is also able to use L-lactate and 2-hydroxbyutanoate as substrate in vitro, but shows almost no activity with L-mandelate. This chain is Glycolate oxidase, found in Spinacia oleracea (Spinach).